A 1012-amino-acid polypeptide reads, in one-letter code: Antigenic heat-stable 120 kDa protein (1012 aa).

Disordered stretches follow at residues 1–73 and 348–396; these read DTSE…TSDP and GQSK…PQSQ. Positions 12-27 are enriched in basic and acidic residues; the sequence is EYTEEQKQTLEQEQKE. Residues 47–61 show a composition bias toward low complexity; it reads SASSAQSTPSMSALS. Polar residues-rich tracts occupy residues 62–73, 348–373, and 380–396; these read GNISPDSQTSDP, GQSKEQPLITPQQTTSSSVEPPQYKQ, and PTNQPLQAETSQMPQSQ.

It localises to the cytoplasm. This chain is Antigenic heat-stable 120 kDa protein (sca4), found in Rickettsia slovaca.